The sequence spans 295 residues: Cytidine deaminase (295 aa).

CMP/dCMP-type deaminase domains lie at 48 to 168 (SDKE…FGPA) and 187 to 295 (DDKD…FVNV). 89–91 (NME) provides a ligand contact to substrate. Histidine 102 lines the Zn(2+) pocket. The Proton donor role is filled by glutamate 104. Zn(2+)-binding residues include cysteine 129 and cysteine 132.

It belongs to the cytidine and deoxycytidylate deaminase family. In terms of assembly, homodimer. The cofactor is Zn(2+).

The enzyme catalyses cytidine + H2O + H(+) = uridine + NH4(+). The catalysed reaction is 2'-deoxycytidine + H2O + H(+) = 2'-deoxyuridine + NH4(+). This enzyme scavenges exogenous and endogenous cytidine and 2'-deoxycytidine for UMP synthesis. The polypeptide is Cytidine deaminase (Vibrio parahaemolyticus serotype O3:K6 (strain RIMD 2210633)).